The following is a 328-amino-acid chain: Formyltetrahydrofolate deformylase 2, mitochondrial (328 aa).

The transit peptide at 1–12 directs the protein to the mitochondrion; it reads MIRRVSTTSCLS. The ACT domain occupies 46-129; sequence FHVFHCPDVV…SVVRVPSLDP (84 aa). Asp-272 is an active-site residue.

This sequence belongs to the PurU family. Expressed in leaves, cotyledons, roots, seeds and flowers.

It localises to the mitochondrion. It carries out the reaction (6R)-10-formyltetrahydrofolate + H2O = (6S)-5,6,7,8-tetrahydrofolate + formate + H(+). In terms of biological role, deformylase involved in photorespiration. Prevents excessive accumulation of 5-formyl tetrahydrofolate (THF), a potent inhibitor of the Gly decarboxylase/Ser hydroxymethyltransferase complex. The sequence is that of Formyltetrahydrofolate deformylase 2, mitochondrial (PURU2) from Arabidopsis thaliana (Mouse-ear cress).